The following is a 185-amino-acid chain: Casparian strip membrane protein 1 (185 aa).

Over 1-32 the chain is Cytoplasmic; that stretch reads MKAVSIEAGERSKAKRVHGVNRGISVFDLVLR. The chain crosses the membrane as a helical span at residues 33-53; that stretch reads IVALVGTLASAVAMGTAGQAL. Residues 54-73 lie on the Extracellular side of the membrane; it reads SFSTQIVNFEAQYDDIDAFK. The chain crosses the membrane as a helical span at residues 74-94; sequence FFVVSNSITCVYLALSIPISI. The Cytoplasmic segment spans residues 95–106; that stretch reads FHIIRSRAGKSR. The helical transmembrane segment at 107–127 threads the bilayer; sequence VLLIVLDAIMLVFLTSGASAA. At 128–160 the chain is on the extracellular side; it reads AAIVYLAHNGNTSTNWFSICQQYTDFCQRSAGS. Residue N138 is glycosylated (N-linked (GlcNAc...) asparagine). A helical transmembrane segment spans residues 161–181; it reads LIGSFGAMALMVLLIILSSIA. Residues 182–185 are Cytoplasmic-facing; sequence LSRR.

The protein belongs to the Casparian strip membrane proteins (CASP) family. Homodimer and heterodimers.

It is found in the cell membrane. Regulates membrane-cell wall junctions and localized cell wall deposition. Required for establishment of the Casparian strip membrane domain (CSD) and the subsequent formation of Casparian strips, a cell wall modification of the root endodermis that determines an apoplastic barrier between the intraorganismal apoplasm and the extraorganismal apoplasm and prevents lateral diffusion. This is Casparian strip membrane protein 1 from Solanum demissum (Wild potato).